Here is a 282-residue protein sequence, read N- to C-terminus: Hydrogenase expression/formation protein HoxQ (282 aa).

It belongs to the HupH/HyaF family.

This is Hydrogenase expression/formation protein HoxQ (hoxQ) from Cupriavidus necator (strain ATCC 17699 / DSM 428 / KCTC 22496 / NCIMB 10442 / H16 / Stanier 337) (Ralstonia eutropha).